The chain runs to 295 residues: Proline-rich protein 32 (295 aa).

2 disordered regions span residues 10–48 (GHAP…GHPG) and 101–120 (ATGE…SGQD).

The sequence is that of Proline-rich protein 32 (PRR32) from Bos taurus (Bovine).